A 96-amino-acid chain; its full sequence is Sec-independent protein translocase protein TatA (96 aa).

The chain crosses the membrane as a helical span at residues 1–21; the sequence is MGFSSIWHWIIVLVVVLLLFG. Positions 42-96 are disordered; the sequence is GMADDEDDEAASVSAERRGIEDGKPAQTIYPPQQPQQPQQPPQQPPVHRDDAPRG. The segment covering 56–65 has biased composition (basic and acidic residues); sequence AERRGIEDGK. Residues 73 to 86 are compositionally biased toward pro residues; the sequence is PQQPQQPQQPPQQP.

It belongs to the TatA/E family. In terms of assembly, the Tat system comprises two distinct complexes: a TatABC complex, containing multiple copies of TatA, TatB and TatC subunits, and a separate TatA complex, containing only TatA subunits. Substrates initially bind to the TatABC complex, which probably triggers association of the separate TatA complex to form the active translocon.

The protein resides in the cell inner membrane. Functionally, part of the twin-arginine translocation (Tat) system that transports large folded proteins containing a characteristic twin-arginine motif in their signal peptide across membranes. TatA could form the protein-conducting channel of the Tat system. The polypeptide is Sec-independent protein translocase protein TatA (Rhodospirillum rubrum (strain ATCC 11170 / ATH 1.1.1 / DSM 467 / LMG 4362 / NCIMB 8255 / S1)).